Here is a 188-residue protein sequence, read N- to C-terminus: Peptide deformylase (188 aa).

Residues Cys-94 and His-136 each contribute to the Fe cation site. The active site involves Glu-137. His-140 lines the Fe cation pocket.

The protein belongs to the polypeptide deformylase family. Requires Fe(2+) as cofactor.

The enzyme catalyses N-terminal N-formyl-L-methionyl-[peptide] + H2O = N-terminal L-methionyl-[peptide] + formate. In terms of biological role, removes the formyl group from the N-terminal Met of newly synthesized proteins. Requires at least a dipeptide for an efficient rate of reaction. N-terminal L-methionine is a prerequisite for activity but the enzyme has broad specificity at other positions. This is Peptide deformylase from Chlorobium phaeobacteroides (strain DSM 266 / SMG 266 / 2430).